A 210-amino-acid chain; its full sequence is MEDLRDLSPRDLHKARGAKEEFKNVFLLADGELTVHASFSRIFTRRTNKMGTEYVAVLTGSFLTGAMMNLHLLTIPILIETTRQPAQLVHQWSRIFYSGHRKGPGIALVTGALYGYAAWAKYSVGEPWHHWMVAGVTTVSMVPYTWMFMNATNTALFHAEDQFEKGGVEISLQESVRLVGKWDWLNTVRALFPLAGSVMGMLGVCGVVRY.

A run of 4 helical transmembrane segments spans residues T59–I79, G105–G125, W131–A151, and V188–V208.

The protein belongs to the anthrone oxygenase family.

Its subcellular location is the membrane. The catalysed reaction is noranthrone + O2 = norsolorinic acid + H2O. It functions in the pathway mycotoxin biosynthesis; aflatoxin biosynthesis. Functionally, monooxygenase that converts norsolorinic acid anthrone to norsolorinic acid during aflatoxin biosynthesis. This Aspergillus flavus (strain ATCC 200026 / FGSC A1120 / IAM 13836 / NRRL 3357 / JCM 12722 / SRRC 167) protein is Noranthrone monooxygenase (hypC).